The following is a 155-amino-acid chain: Ribosome maturation factor RimP (155 aa).

Belongs to the RimP family.

The protein resides in the cytoplasm. In terms of biological role, required for maturation of 30S ribosomal subunits. The chain is Ribosome maturation factor RimP from Deinococcus geothermalis (strain DSM 11300 / CIP 105573 / AG-3a).